The following is a 257-amino-acid chain: MRHLRDLPDEEIIIASGSEILELVVNATMGDDHPEPPTPFGTPSLHDLYDLEVDVPEDDPNEKAVNDLFSDAALLAAEEASSPSSDSDSSLHTPRHDRGEKEIPGLKWEKMDLRCYEECLPPSDDEDEQAIQNAASHGVQAVSESFALDCPPLPGHGCKSCEFHRINTGDKAVLCALCYMRAYNHCVYSPVSDADDETPTTESTLSPPEIGTSPSDNIVRPVPVRATGRRAAVECLDDLLQGGDEPLDLCTRKRPRH.

Disordered regions lie at residues 26–46 (NATMGDDHPEPPTPFGTPSLH) and 75–103 (LAAEEASSPSSDSDSSLHTPRHDRGEKEI). Residues 43-51 (PSLHDLYDL) are interaction with RB1 in competition with E2F1. The span at 75 to 91 (LAAEEASSPSSDSDSSL) shows a compositional bias: low complexity. The interval 79–144 (EASSPSSDSD…ASHGVQAVSE (66 aa)) is interaction with UBE2I. A compositionally biased stretch (basic and acidic residues) spans 94–103 (PRHDRGEKEI). The PXLXP motif, interaction with host ZMYND11 motif lies at 104-108 (PGLKW). The short motif at 113-117 (LRCYE) is the LXCXE motif, interaction with host RB1 and TMEM173/STING element. A zinc finger lies at 158 to 178 (CKSCEFHRINTGDKAVLCALC). The disordered stretch occupies residues 191 to 221 (VSDADDETPTTESTLSPPEIGTSPSDNIVRP). Over residues 200-209 (TTESTLSPPE) the composition is skewed to low complexity. The short motif at 246-250 (PLDLC) is the PXDLS motif, CTBP-binding element. A Nuclear localization signal motif is present at residues 252–257 (RKRPRH).

This sequence belongs to the adenoviridae E1A protein family. In terms of assembly, interacts with host UBE2I; this interaction interferes with polySUMOylation. Interacts with host RB1; this interaction induces the aberrant dissociation of RB1-E2F1 complex thereby disrupting the activity of RB1 and activating E2F1-regulated genes. Interacts with host ATF7; the interaction enhances ATF7-mediated viral transactivation activity which requires the zinc binding domains of both proteins. Isoform early E1A 32 kDa protein and isoform early E1A 26 kDa protein interact (via N-terminus) with CUL1 and E3 ubiquitin ligase RBX1; these interactions inhibit RBX1-CUL1-dependent elongation reaction of ubiquitin chains and attenuate ubiquitination of SCF(FBXW7) target proteins. Interacts (via PXLXP motif) with host ZMYND11/BS69 (via MYND-type zinc finger); this interaction inhibits E1A mediated transactivation. Interacts with host EP300; this interaction stimulates the acetylation of RB1 by recruiting EP300 and RB1 into a multimeric-protein complex. Interacts with host CTBP1 and CTBP2; this interaction seems to potentiate viral replication. Interacts with host DCAF7. Interacts with host DYRK1A. Interacts with host KPNA4; this interaction allows E1A import into the host nucleus. Interacts with host EP400; this interaction stabilizes MYC. Interacts with host TBP protein; this interaction probably disrupts the TBP-TATA complex. Interacts (via LXCXE motif) with host TMEM173/STING; this interaction impairs the ability of TMEM173/STING to sense cytosolic DNA and promote the production of type I interferon (IFN-alpha and IFN-beta). Interacts (via C-terminus) with host ZBED1/hDREF (via C-terminus); the interaction is direct.

The protein localises to the host nucleus. Its function is as follows. Plays a role in viral genome replication by driving entry of quiescent cells into the cell cycle. Stimulation of progression from G1 to S phase allows the virus to efficiently use the cellular DNA replicating machinery to achieve viral genome replication. E1A protein has both transforming and trans-activating activities. Induces the disassembly of the E2F1 transcription factor from RB1 by direct competition for the same binding site on RB1, with subsequent transcriptional activation of E2F1-regulated S-phase genes and of the E2 region of the adenoviral genome. Release of E2F1 leads to the ARF-mediated inhibition of MDM2 and causes TP53/p53 to accumulate because it is not targeted for degradation by MDM2-mediated ubiquitination anymore. This increase in TP53, in turn, would arrest the cell proliferation and direct its death but this effect is counteracted by the viral protein E1B-55K. Inactivation of the ability of RB1 to arrest the cell cycle is critical for cellular transformation, uncontrolled cellular growth and proliferation induced by viral infection. Interaction with RBX1 and CUL1 inhibits ubiquitination of the proteins targeted by SCF(FBXW7) ubiquitin ligase complex, and may be linked to unregulated host cell proliferation. The tumorigenesis-restraining activity of E1A may be related to the disruption of the host CtBP-CtIP complex through the CtBP binding motif. Interaction with host TMEM173/STING impairs the ability of TMEM173/STING to sense cytosolic DNA and promote the production of type I interferon (IFN-alpha and IFN-beta). Promotes the sumoylation of host ZBED1/hDREF with SUMO1. The protein is Early E1A protein of Human adenovirus E serotype 4 (HAdV-4).